Here is a 395-residue protein sequence, read N- to C-terminus: Flap endonuclease 1 (395 aa).

The tract at residues 1–108 (MGILGLSKLL…DELETRRQKA (108 aa)) is N-domain. D34 serves as a coordination point for Mg(2+). Residue R74 coordinates DNA. Mg(2+) contacts are provided by D90, E162, E164, D183, and D185. The tract at residues 126–257 (MMEKMSKRTV…QRAWEGIQRY (132 aa)) is I-domain. E162 is a binding site for DNA. DNA contacts are provided by G235 and D237. Residue D237 coordinates Mg(2+). Positions 340-348 (TQGRLDNFF) are interaction with PCNA.

It belongs to the XPG/RAD2 endonuclease family. FEN1 subfamily. As to quaternary structure, interacts with PCNA. Three molecules of FEN1 bind to one PCNA trimer with each molecule binding to one PCNA monomer. PCNA stimulates the nuclease activity without altering cleavage specificity. Requires Mg(2+) as cofactor. In terms of processing, phosphorylated. Phosphorylation upon DNA damage induces relocalization to the nuclear plasma.

The protein localises to the nucleus. Its subcellular location is the nucleolus. It localises to the nucleoplasm. The protein resides in the mitochondrion. Structure-specific nuclease with 5'-flap endonuclease and 5'-3' exonuclease activities involved in DNA replication and repair. During DNA replication, cleaves the 5'-overhanging flap structure that is generated by displacement synthesis when DNA polymerase encounters the 5'-end of a downstream Okazaki fragment. It enters the flap from the 5'-end and then tracks to cleave the flap base, leaving a nick for ligation. Also involved in the long patch base excision repair (LP-BER) pathway, by cleaving within the apurinic/apyrimidinic (AP) site-terminated flap. Acts as a genome stabilization factor that prevents flaps from equilibrating into structures that lead to duplications and deletions. Also possesses 5'-3' exonuclease activity on nicked or gapped double-stranded DNA, and exhibits RNase H activity. Also involved in replication and repair of rDNA and in repairing mitochondrial DNA. In Leishmania braziliensis, this protein is Flap endonuclease 1.